Consider the following 251-residue polypeptide: Hydroxyacylglutathione hydrolase (251 aa).

Zn(2+)-binding residues include histidine 53, histidine 55, aspartate 57, histidine 58, histidine 110, aspartate 127, and histidine 165.

It belongs to the metallo-beta-lactamase superfamily. Glyoxalase II family. Monomer. Requires Zn(2+) as cofactor.

It carries out the reaction an S-(2-hydroxyacyl)glutathione + H2O = a 2-hydroxy carboxylate + glutathione + H(+). It functions in the pathway secondary metabolite metabolism; methylglyoxal degradation; (R)-lactate from methylglyoxal: step 2/2. Thiolesterase that catalyzes the hydrolysis of S-D-lactoyl-glutathione to form glutathione and D-lactic acid. This chain is Hydroxyacylglutathione hydrolase, found in Yersinia pestis (strain Pestoides F).